The following is a 416-amino-acid chain: Tyrosine--tRNA ligase (416 aa).

Tyr-40 contributes to the L-tyrosine binding site. Positions 45–54 (ATAKSLHVGS) match the 'HIGH' region motif. Tyr-177 and Gln-181 together coordinate L-tyrosine. Positions 237-241 (KMGKS) match the 'KMSKS' region motif. Lys-240 provides a ligand contact to ATP. The S4 RNA-binding domain occupies 351 to 415 (ISIVQLIVKS…GKKRHAMVQL (65 aa)).

This sequence belongs to the class-I aminoacyl-tRNA synthetase family. TyrS type 1 subfamily. Homodimer.

It is found in the cytoplasm. It catalyses the reaction tRNA(Tyr) + L-tyrosine + ATP = L-tyrosyl-tRNA(Tyr) + AMP + diphosphate + H(+). In terms of biological role, catalyzes the attachment of tyrosine to tRNA(Tyr) in a two-step reaction: tyrosine is first activated by ATP to form Tyr-AMP and then transferred to the acceptor end of tRNA(Tyr). The polypeptide is Tyrosine--tRNA ligase (Roseobacter denitrificans (strain ATCC 33942 / OCh 114) (Erythrobacter sp. (strain OCh 114))).